Consider the following 229-residue polypeptide: Wtf element wtf14 (229 aa).

The segment covering 1-26 (MENNHHLAKDSLDELNPKRGKGEHET) has biased composition (basic and acidic residues). The tract at residues 1–27 (MENNHHLAKDSLDELNPKRGKGEHETQ) is disordered. 4 consecutive transmembrane segments (helical) span residues 71–91 (IPAVLLPVFVINIALFKYLVF), 100–120 (VLFGLGNGGINIFSMWLLLAT), 151–171 (LYAILKLTFVNAFAIPLLMFF), and 188–208 (VIGVMLNVAYFIIEIENPGLF).

It belongs to the WTF family.

The protein resides in the endoplasmic reticulum membrane. Functionally, may act in meiotic drive. This Schizosaccharomyces kambucha (Fission yeast) protein is Wtf element wtf14.